Consider the following 812-residue polypeptide: Valine--tRNA ligase (812 aa).

A 'HIGH' region motif is present at residues 46-56 (PTVSGQLHIGH). Positions 536–540 (KMSKS) match the 'KMSKS' region motif. Position 539 (K539) interacts with ATP.

This sequence belongs to the class-I aminoacyl-tRNA synthetase family. ValS type 2 subfamily. Monomer.

It localises to the cytoplasm. The enzyme catalyses tRNA(Val) + L-valine + ATP = L-valyl-tRNA(Val) + AMP + diphosphate. Catalyzes the attachment of valine to tRNA(Val). As ValRS can inadvertently accommodate and process structurally similar amino acids such as threonine, to avoid such errors, it has a 'posttransfer' editing activity that hydrolyzes mischarged Thr-tRNA(Val) in a tRNA-dependent manner. The sequence is that of Valine--tRNA ligase from Rickettsia bellii (strain RML369-C).